The following is a 104-amino-acid chain: Large ribosomal subunit protein eL30 (104 aa).

This sequence belongs to the eukaryotic ribosomal protein eL30 family.

The chain is Large ribosomal subunit protein eL30 (RPL30) from Leishmania major.